Reading from the N-terminus, the 295-residue chain is Craniofacial development protein 1 (295 aa).

2 stretches are compositionally biased toward acidic residues: residues 1–18 (MEEF…DEDY) and 25–43 (YSED…DGEE). Disordered stretches follow at residues 1-153 (MEEF…LDKP) and 188-217 (FLKQ…IKRA). Residues 49–65 (KGKRRKAQGIPARKRKQ) show a composition bias toward basic residues. Ser80, Ser83, Ser84, and Ser112 each carry phosphoserine. A Glycyl lysine isopeptide (Lys-Gly) (interchain with G-Cter in SUMO2) cross-link involves residue Lys146. A hydrophilic region spans residues 174–213 (VTKEVDAASKEAKSFLKQTEREKPQALVTSPATPLPAGSG). Basic and acidic residues predominate over residues 188-197 (FLKQTEREKP). A Phosphoserine modification is found at Ser212. In terms of domain architecture, BCNT-C spans 214–295 (IKRASGMSSL…RDLRLSKMKP (82 aa)). Lys215 carries the post-translational modification N6-methyllysine. Ser246 is modified (phosphoserine).

In terms of tissue distribution, expressed in lung, liver and heart, with higher expression in teeth.

It localises to the chromosome. It is found in the centromere. The protein resides in the kinetochore. May play a role during embryogenesis. May modulate tooth organogenesis since alterations of this protein function affect tooth organs size as well as individual cell fate and survival. In embryonic cells, blockage of the function results in increased number of apoptotic cells, reduced proliferation, alterations in cell shape and fibronection matrix synthesis. The protein is Craniofacial development protein 1 (Cfdp1) of Mus musculus (Mouse).